The chain runs to 46 residues: Mu-segestritoxin-Sf1d (46 aa).

4 cysteine pairs are disulfide-bonded: Cys-3/Cys-19, Cys-10/Cys-22, Cys-18/Cys-42, and Cys-24/Cys-40. The keys region for toxin activity stretch occupies residues 31–33 (RPW).

The protein belongs to the neurotoxin 16 (SFI) family. Expressed by the venom gland.

It localises to the secreted. In terms of biological role, insecticidal toxin. It inhibits insect voltage-gated sodium channels (Nav) by partially blocking the channel pore in DUM neurons from the American cockroach, not by acting as a gating modifier. The inhibition is only partially reversible after prolonged washout. In vivo, the toxin causes flaccid paralysis followed by death when injected into Heliothis virescens larvae. It also causes uncoordinated movements followed by full paralysis to sheep blowflies (Lucilia cuprina). When the toxin is fused to snowdrop lectin, it is orally active against larvae of the tomato moth (Laconobia oleracea), the rice brown planthopper (Nilaparvata lugens), and the peach-potato aphid (Myzus persicae). In Segestria florentina (Tube-web spider), this protein is Mu-segestritoxin-Sf1d.